Here is a 373-residue protein sequence, read N- to C-terminus: Probable quinol oxidase subunit 2 (373 aa).

The N-terminal stretch at 1-19 (MSKFKSLLLLFGSLILLSG) is a signal peptide. Residue Cys20 is the site of N-palmitoyl cysteine attachment. Cys20 carries the S-diacylglycerol cysteine lipid modification. Transmembrane regions (helical) follow at residues 38–58 (FLIM…LILF) and 82–102 (LETI…IPTV). 2 stretches are compositionally biased toward basic and acidic residues: residues 292-320 (EERT…ERHG) and 339-373 (EESH…GGGH). The segment at 292-373 (EERTADVLDK…KKDHENGGGH (82 aa)) is disordered.

It belongs to the cytochrome c oxidase subunit 2 family.

The protein localises to the cell membrane. It carries out the reaction 2 a quinol + O2 = 2 a quinone + 2 H2O. In terms of biological role, catalyzes quinol oxidation with the concomitant reduction of oxygen to water. Subunit II transfers the electrons from a quinol to the binuclear center of the catalytic subunit I. The sequence is that of Probable quinol oxidase subunit 2 (qoxA) from Staphylococcus saprophyticus subsp. saprophyticus (strain ATCC 15305 / DSM 20229 / NCIMB 8711 / NCTC 7292 / S-41).